The sequence spans 87 residues: Defensin-like protein 175 (87 aa).

The N-terminal stretch at 1–23 (MAKATSSLVVPIIFLVIFALVEQ) is a signal peptide. Cystine bridges form between Cys-27–Cys-66, Cys-36–Cys-55, Cys-39–Cys-60, and Cys-43–Cys-62.

This sequence belongs to the DEFL family.

The protein localises to the secreted. In Arabidopsis thaliana (Mouse-ear cress), this protein is Defensin-like protein 175.